The sequence spans 229 residues: Glutamine amidotransferase-like class 1 domain-containing protein 1 (229 aa).

An N-terminal signal peptide occupies residues 1–34 (MKKQGAPVSGGGTERLTKPSCLMVGSAVAEGVSA). Residues N154 and N212 are each glycosylated (N-linked (GlcNAc...) asparagine).

It belongs to the peptidase C56 family. As to quaternary structure, homotetramer. Component of the FERRY complex.

The protein resides in the secreted. It is found in the early endosome. In terms of biological role, component of the FERRY complex (Five-subunit Endosomal Rab5 and RNA/ribosome intermediary). The FERRY complex directly interacts with mRNAs and RAB5A, and functions as a RAB5A effector involved in the localization and the distribution of specific mRNAs most likely by mediating their endosomal transport. The complex recruits mRNAs and ribosomes to early endosomes through direct mRNA-interaction. This Xenopus laevis (African clawed frog) protein is Glutamine amidotransferase-like class 1 domain-containing protein 1.